Consider the following 242-residue polypeptide: Leucyl/phenylalanyl-tRNA--protein transferase (242 aa).

This sequence belongs to the L/F-transferase family.

Its subcellular location is the cytoplasm. The catalysed reaction is N-terminal L-lysyl-[protein] + L-leucyl-tRNA(Leu) = N-terminal L-leucyl-L-lysyl-[protein] + tRNA(Leu) + H(+). The enzyme catalyses N-terminal L-arginyl-[protein] + L-leucyl-tRNA(Leu) = N-terminal L-leucyl-L-arginyl-[protein] + tRNA(Leu) + H(+). It carries out the reaction L-phenylalanyl-tRNA(Phe) + an N-terminal L-alpha-aminoacyl-[protein] = an N-terminal L-phenylalanyl-L-alpha-aminoacyl-[protein] + tRNA(Phe). Its function is as follows. Functions in the N-end rule pathway of protein degradation where it conjugates Leu, Phe and, less efficiently, Met from aminoacyl-tRNAs to the N-termini of proteins containing an N-terminal arginine or lysine. The sequence is that of Leucyl/phenylalanyl-tRNA--protein transferase from Alcanivorax borkumensis (strain ATCC 700651 / DSM 11573 / NCIMB 13689 / SK2).